The following is a 251-amino-acid chain: Flap endonuclease Xni (251 aa).

D104 provides a ligand contact to Mg(2+). The 5'-3' exonuclease domain maps to 160–249 (VQPQQLPDYW…IDGNLQQLRL (90 aa)). Residues L171, A172, P180, V182, and I185 each coordinate K(+). The interval 184–189 (GIGPKS) is interaction with DNA.

The protein belongs to the Xni family. The cofactor is Mg(2+). Requires K(+) as cofactor.

Functionally, has flap endonuclease activity. During DNA replication, flap endonucleases cleave the 5'-overhanging flap structure that is generated by displacement synthesis when DNA polymerase encounters the 5'-end of a downstream Okazaki fragment. In Escherichia coli O6:K15:H31 (strain 536 / UPEC), this protein is Flap endonuclease Xni.